The following is a 252-amino-acid chain: MSAYAIIAASGVGKRMKLQGSLSKQFLQIGGFPVIYHTLSAFERSASVDSVFIATRQESIELLENMRDEYGFTKIAAIIPGGKERQDSIYNCIELIERQILDSGTAPDAILVHDGARPFIQPDEIDEIAALSAQYGACVPATKPKDTIKFISENDPGYFGRTLDRSRLLQVQTPQGFASKTLIQAHKHARLEQTYATDDAALVEEFFPEQHIRIHETGYHNIKITTPEDIHLAEAILAKLQSQQELTSSKKN.

Belongs to the IspD/TarI cytidylyltransferase family. IspD subfamily.

It catalyses the reaction 2-C-methyl-D-erythritol 4-phosphate + CTP + H(+) = 4-CDP-2-C-methyl-D-erythritol + diphosphate. It participates in isoprenoid biosynthesis; isopentenyl diphosphate biosynthesis via DXP pathway; isopentenyl diphosphate from 1-deoxy-D-xylulose 5-phosphate: step 2/6. Its function is as follows. Catalyzes the formation of 4-diphosphocytidyl-2-C-methyl-D-erythritol from CTP and 2-C-methyl-D-erythritol 4-phosphate (MEP). This chain is 2-C-methyl-D-erythritol 4-phosphate cytidylyltransferase, found in Chlorobium phaeobacteroides (strain BS1).